A 347-amino-acid chain; its full sequence is MSVMFDPQAAIYPFPPKPTPLNDDEKQFYREKIKRLLKERNAVMVAHYYTDPEIQQLAEETGGCISDSLEMARFGAKHAASTLLVAGVRFMGETAKILSPAKTILMPTLAAECSLDLGCPIDEFSAFCDAHPDRTVVVYANTSAAVKARADWVVTSSIAVELIEHLDSLGEKIIWAPDRHLGNYVQKQTGADVLCWQGACIVHDEFKTQALTRLKKIYPDAALLVHPESPQSIVEMADAVGSTSQLIKAAKTLPHRQLIVATDRGIFYKMQQAVPEKELLEAPTAGEGATCRSCAHCPWMAMNGLKAIAEGLEQGGAAHEIQVDAALREGALLPLNRMLDFATTLRA.

Residues H47 and S68 each coordinate iminosuccinate. C113 serves as a coordination point for [4Fe-4S] cluster. Iminosuccinate is bound by residues 139 to 141 and S156; that span reads YAN. C200 is a binding site for [4Fe-4S] cluster. Residues 226-228 and T243 contribute to the iminosuccinate site; that span reads HPE. Residue C297 coordinates [4Fe-4S] cluster.

This sequence belongs to the quinolinate synthase family. Type 1 subfamily. [4Fe-4S] cluster serves as cofactor.

It is found in the cytoplasm. It catalyses the reaction iminosuccinate + dihydroxyacetone phosphate = quinolinate + phosphate + 2 H2O + H(+). The protein operates within cofactor biosynthesis; NAD(+) biosynthesis; quinolinate from iminoaspartate: step 1/1. Catalyzes the condensation of iminoaspartate with dihydroxyacetone phosphate to form quinolinate. The polypeptide is Quinolinate synthase (Salmonella agona (strain SL483)).